A 212-amino-acid polypeptide reads, in one-letter code: Ribonuclease HII (212 aa).

The RNase H type-2 domain occupies 17–211 (RVLAGIDEAG…VLELLDLTDS (195 aa)). Positions 23, 24, and 120 each coordinate a divalent metal cation.

It belongs to the RNase HII family. Mn(2+) serves as cofactor. It depends on Mg(2+) as a cofactor.

It localises to the cytoplasm. It carries out the reaction Endonucleolytic cleavage to 5'-phosphomonoester.. Endonuclease that specifically degrades the RNA of RNA-DNA hybrids. This is Ribonuclease HII from Chloroflexus aggregans (strain MD-66 / DSM 9485).